Reading from the N-terminus, the 437-residue chain is Probable glycine dehydrogenase (decarboxylating) subunit 1 (437 aa).

It belongs to the GcvP family. N-terminal subunit subfamily. In terms of assembly, the glycine cleavage system is composed of four proteins: P, T, L and H. In this organism, the P 'protein' is a heterodimer of two subunits.

It catalyses the reaction N(6)-[(R)-lipoyl]-L-lysyl-[glycine-cleavage complex H protein] + glycine + H(+) = N(6)-[(R)-S(8)-aminomethyldihydrolipoyl]-L-lysyl-[glycine-cleavage complex H protein] + CO2. Functionally, the glycine cleavage system catalyzes the degradation of glycine. The P protein binds the alpha-amino group of glycine through its pyridoxal phosphate cofactor; CO(2) is released and the remaining methylamine moiety is then transferred to the lipoamide cofactor of the H protein. In Thermotoga petrophila (strain ATCC BAA-488 / DSM 13995 / JCM 10881 / RKU-1), this protein is Probable glycine dehydrogenase (decarboxylating) subunit 1.